Here is a 487-residue protein sequence, read N- to C-terminus: Glutamyl-tRNA(Gln) amidotransferase subunit A (487 aa).

Active-site charge relay system residues include lysine 76 and serine 151. Serine 175 functions as the Acyl-ester intermediate in the catalytic mechanism.

The protein belongs to the amidase family. GatA subfamily. Heterotrimer of A, B and C subunits.

It carries out the reaction L-glutamyl-tRNA(Gln) + L-glutamine + ATP + H2O = L-glutaminyl-tRNA(Gln) + L-glutamate + ADP + phosphate + H(+). Its function is as follows. Allows the formation of correctly charged Gln-tRNA(Gln) through the transamidation of misacylated Glu-tRNA(Gln) in organisms which lack glutaminyl-tRNA synthetase. The reaction takes place in the presence of glutamine and ATP through an activated gamma-phospho-Glu-tRNA(Gln). The protein is Glutamyl-tRNA(Gln) amidotransferase subunit A of Azoarcus sp. (strain BH72).